The following is a 365-amino-acid chain: Protein Tob1 (365 aa).

A Bipartite nuclear localization signal motif is present at residues 22 to 39 (RRRVNIFGEELERLLKQK). The interval 82 to 92 (VRGNLPQDLSV) is important for nuclear localization. A compositionally biased stretch (low complexity) spans 144 to 160 (DPASSVSSSPSPPFGHS). A disordered region spans residues 144–171 (DPASSVSSSPSPPFGHSAAVSPTFMPRS). The interval 161–220 (AAVSPTFMPRSTQPLTFTTATFAATKFGSTKMKNSGRSSKVARTSPISLGLNVNVNDLLK) is required for interaction with CPEB3. A Phosphothreonine modification is found at threonine 204. Positions 228–236 (MHSLYGLGL) match the Nuclear export signal motif. Residues 233 to 287 (GLGLGSQQQPQPQPQQPPSQPPPPPPPPQQQQQHQQQQQQQQQQQQQPQQQTSAL) form a disordered region. The segment covering 243 to 261 (QPQPQQPPSQPPPPPPPPQ) has biased composition (pro residues). Positions 262 to 283 (QQQQHQQQQQQQQQQQQQPQQQ) are enriched in low complexity.

Belongs to the BTG family. In terms of assembly, interacts with ERBB2. Interacts with CNOT7. Interacts with CPEB3 (via C-terminal RNA-binding region); recruits CNOT7 to CPEB3 to form a ternary complex required for mRNA deadenylation and decay. Interacts with CNOT8. Interacts with CPEB4. Post-translationally, phosphorylated on Ser and Thr residues.

Its subcellular location is the cytoplasm. The protein resides in the nucleus. Its function is as follows. Anti-proliferative protein; the function is mediated by association with deadenylase subunits of the CCR4-NOT complex. Mediates CPEB3-accelerated mRNA deadenylation by binding to CPEB3 and recruiting CNOT7 which leads to target mRNA deadenylation and decay. The chain is Protein Tob1 (Tob1) from Rattus norvegicus (Rat).